Here is a 411-residue protein sequence, read N- to C-terminus: Putative ion-transport protein YfeO (411 aa).

The next 11 membrane-spanning stretches (helical) occupy residues 9–29, 54–74, 99–119, 149–169, 186–206, 223–243, 258–278, 296–316, 322–342, 343–363, and 386–406; these read MLLL…VLIA, DSPF…GLII, ALPG…SLGP, ILAS…AALI, LFAP…FFHP, IASG…AVWC, VLIL…GGPL, LGAG…VIAA, GGRI…LHAH, VEAV…VLVV, and LLCI…LLAA.

This sequence belongs to the chloride channel (TC 2.A.49) family.

The protein localises to the cell membrane. The polypeptide is Putative ion-transport protein YfeO (Salmonella paratyphi A (strain ATCC 9150 / SARB42)).